The following is a 77-amino-acid chain: U14-theraphotoxin-Cg1c (77 aa).

The first 21 residues, 1-21 (MNTSDPPAVLRIAAITLLCTA), serve as a signal peptide directing secretion. A propeptide spanning residues 22–49 (SESVEQNPLIPFENAVLGSYAKMASEKR) is cleaved from the precursor. Intrachain disulfides connect cysteine 50–cysteine 64 and cysteine 57–cysteine 69.

This sequence belongs to the neurotoxin 10 (Hwtx-1) family. 65 (Jztx-21) subfamily. As to expression, expressed by the venom gland.

It is found in the secreted. Probable ion channel inhibitor. In Chilobrachys guangxiensis (Chinese earth tiger tarantula), this protein is U14-theraphotoxin-Cg1c.